The chain runs to 126 residues: Methylglyoxal synthase (126 aa).

Residues 1-126 (MAGGKCIALI…AERLIKTLNH (126 aa)) form the MGS-like domain. Residues H12, K16, 38 to 41 (TGTT), and 59 to 60 (SG) each bind substrate. The active-site Proton donor/acceptor is the D65. H92 is a substrate binding site.

It belongs to the methylglyoxal synthase family.

The enzyme catalyses dihydroxyacetone phosphate = methylglyoxal + phosphate. Catalyzes the formation of methylglyoxal from dihydroxyacetone phosphate. This Rhizobium rhizogenes (strain K84 / ATCC BAA-868) (Agrobacterium radiobacter) protein is Methylglyoxal synthase.